The following is a 339-amino-acid chain: Dihydroorotate dehydrogenase (quinone) (339 aa).

FMN is bound by residues 64–68 (AGADK) and Thr88. Lys68 provides a ligand contact to substrate. 113 to 117 (NRNGF) lines the substrate pocket. Residues Asn141 and Asn174 each coordinate FMN. Position 174 (Asn174) interacts with substrate. The Nucleophile role is filled by Ser177. Asn179 is a binding site for substrate. 2 residues coordinate FMN: Lys219 and Thr247. Residue 248-249 (NT) coordinates substrate. Residues Gly270, Gly299, and 320-321 (YS) each bind FMN.

Belongs to the dihydroorotate dehydrogenase family. Type 2 subfamily. As to quaternary structure, monomer. Requires FMN as cofactor.

The protein localises to the cell membrane. It catalyses the reaction (S)-dihydroorotate + a quinone = orotate + a quinol. It participates in pyrimidine metabolism; UMP biosynthesis via de novo pathway; orotate from (S)-dihydroorotate (quinone route): step 1/1. Catalyzes the conversion of dihydroorotate to orotate with quinone as electron acceptor. In Haemophilus influenzae (strain PittEE), this protein is Dihydroorotate dehydrogenase (quinone).